The following is a 312-amino-acid chain: Erlin (312 aa).

The Cytoplasmic segment spans residues 1-3 (MLT). The chain crosses the membrane as a helical span at residues 4 to 24 (ELALGLFALWIAIFSQALHKI). Residues 25 to 312 (EEGHVGVYYR…FVMGTTQQTV (288 aa)) lie on the Lumenal side of the membrane. Asn104 is a glycosylation site (N-linked (GlcNAc...) asparagine).

Belongs to the band 7/mec-2 family. In terms of assembly, seems to form a multimeric complex. Expressed in the germline only.

It is found in the endoplasmic reticulum membrane. This chain is Erlin, found in Caenorhabditis elegans.